The primary structure comprises 149 residues: Small ribosomal subunit protein bS6 (149 aa).

The disordered stretch occupies residues 93–149 (VGKHEEGPSAMMQKRDRDDRPRRDGDRPDRGGFGDRGPRPDRGDRDDRPRRPREDRA). Residues 94-149 (GKHEEGPSAMMQKRDRDDRPRRDGDRPDRGGFGDRGPRPDRGDRDDRPRRPREDRA) show a composition bias toward basic and acidic residues.

Belongs to the bacterial ribosomal protein bS6 family.

In terms of biological role, binds together with bS18 to 16S ribosomal RNA. This Rhizobium meliloti (strain 1021) (Ensifer meliloti) protein is Small ribosomal subunit protein bS6.